Reading from the N-terminus, the 149-residue chain is Aquaporin-like protein 2 (149 aa).

Positions 1–35 (MSNESNDLEKNISHLDPTGVDNAYIPPEQPETKHS) are disordered. Residues 1 to 47 (MSNESNDLEKNISHLDPTGVDNAYIPPEQPETKHSRFNIDRDTLRNH) lie on the Cytoplasmic side of the membrane. Residues 48–68 (FIAAVGEFCGTFMFLWCAYVI) form a helical membrane-spanning segment. Topologically, residues 69-89 (CNVANHDVALTTEPEGSHPGQ) are extracellular. A helical transmembrane segment spans residues 90–110 (LIMIALGFGFSVMFSIWCFWW). The Cytoplasmic portion of the chain corresponds to 111 to 149 (GFEPSRFSLFVFGQSHLTSQMCSDVVSSDHCWDGCWWCR).

This sequence belongs to the MIP/aquaporin (TC 1.A.8) family.

It is found in the endoplasmic reticulum membrane. It localises to the cell membrane. Functionally, water channel required to facilitate the transport of water across membranes. Involved in freeze tolerance, osmotolerance and cell flocculation in liquid cultures. Is non-functional in most laboratory strains. In Saccharomyces cerevisiae (strain JAY291) (Baker's yeast), this protein is Aquaporin-like protein 2 (AQY2-2).